A 360-amino-acid polypeptide reads, in one-letter code: Peptide chain release factor 1 (360 aa).

N5-methylglutamine is present on Q235. The disordered stretch occupies residues 286-311; sequence QAQAQADTRRNLLGSGDRSDKIRTYN.

Belongs to the prokaryotic/mitochondrial release factor family. Post-translationally, methylated by PrmC. Methylation increases the termination efficiency of RF1.

The protein localises to the cytoplasm. In terms of biological role, peptide chain release factor 1 directs the termination of translation in response to the peptide chain termination codons UAG and UAA. The polypeptide is Peptide chain release factor 1 (Histophilus somni (strain 2336) (Haemophilus somnus)).